The primary structure comprises 610 residues: UvrABC system protein C (610 aa).

The GIY-YIG domain maps to 16 to 94; the sequence is SQPGVYRMYD…IKLYQPRYNV (79 aa). The UVR domain maps to 204 to 239; the sequence is DQVLTQLISRMETASQNLEFEEAARIRDQIQAVRRV.

This sequence belongs to the UvrC family. As to quaternary structure, interacts with UvrB in an incision complex.

The protein localises to the cytoplasm. Its function is as follows. The UvrABC repair system catalyzes the recognition and processing of DNA lesions. UvrC both incises the 5' and 3' sides of the lesion. The N-terminal half is responsible for the 3' incision and the C-terminal half is responsible for the 5' incision. This is UvrABC system protein C from Escherichia coli (strain ATCC 8739 / DSM 1576 / NBRC 3972 / NCIMB 8545 / WDCM 00012 / Crooks).